We begin with the raw amino-acid sequence, 716 residues long: Leucine-rich repeat neuronal protein 1 (716 aa).

The first 25 residues, 1–25, serve as a signal peptide directing secretion; the sequence is MARMSFVIAACQLVLGLLMTSLTES. The 47-residue stretch at 26–72 folds into the LRRNT domain; that stretch reads SIQNSECPQLCVCEIRPWFTPQSTYREATTVDCNDLRLTRIPSNLSS. Topologically, residues 26–631 are extracellular; that stretch reads SIQNSECPQL…DISDQETSTA (606 aa). LRR repeat units follow at residues 73–95, 96–117, 120–141, 144–165, 168–189, 192–213, 216–237, 240–261, 264–285, 313–335, and 338–359; these read DTQV…QQLF, NLTE…GLAN, QLTT…CLQD, NLQE…AFAG, NLLR…WFDS, NLEI…NFKP, NLRS…ALVG, SLES…ALQK, NLKF…DFKN, ELTK…AFRS, and ALES…TVES. 2 N-linked (GlcNAc...) asparagine glycosylation sites follow: Asn96 and Asn117. The region spanning 371–424 is the LRRCT domain; the sequence is NPLRCDCVIHWINSNKTNIRFMEPLSMFCAMPPEYKGHQVKEVLIQDSSEQCLP. Asn385 carries N-linked (GlcNAc...) asparagine glycosylation. The 92-residue stretch at 424-515 folds into the Ig-like C2-type domain; that stretch reads PMISHDSFPN…GADTRVATIK (92 aa). Residues Cys447 and Cys499 are joined by a disulfide bond. N-linked (GlcNAc...) asparagine glycosylation occurs at Asn517. Positions 525–617 constitute a Fibronectin type-III domain; that stretch reads QVLKIYVKQT…SCVNVTTKNA (93 aa). A helical transmembrane segment spans residues 632–652; it reads LAAVMGSMFAVISLASIAVYF. Topologically, residues 653-716 are cytoplasmic; it reads AKRFKRKNYH…VDTSRSYYMW (64 aa). Residues 691–700 are compositionally biased toward basic and acidic residues; that stretch reads DSEKDKDGSA. Positions 691-716 are disordered; it reads DSEKDKDGSADTKPTQVDTSRSYYMW. The segment covering 702-716 has biased composition (polar residues); it reads TKPTQVDTSRSYYMW.

The protein resides in the membrane. The chain is Leucine-rich repeat neuronal protein 1 (LRRN1) from Homo sapiens (Human).